Consider the following 373-residue polypeptide: Chaperone protein DnaJ (373 aa).

The 65-residue stretch at 5–69 (DYYEVLGVNK…NKRANYDQFG (65 aa)) folds into the J domain. The segment at 130–212 (GTKKEISIKK…CKGKGTENKT (83 aa)) adopts a CR-type zinc-finger fold. C143, C146, C160, C163, C186, C189, C200, and C203 together coordinate Zn(2+). CXXCXGXG motif repeat units lie at residues 143 to 150 (CHTCNGDG), 160 to 167 (CSYCNGAG), 186 to 193 (CPKCEGSG), and 200 to 207 (CPTCKGKG).

The protein belongs to the DnaJ family. As to quaternary structure, homodimer. Zn(2+) serves as cofactor.

The protein localises to the cytoplasm. Its function is as follows. Participates actively in the response to hyperosmotic and heat shock by preventing the aggregation of stress-denatured proteins and by disaggregating proteins, also in an autonomous, DnaK-independent fashion. Unfolded proteins bind initially to DnaJ; upon interaction with the DnaJ-bound protein, DnaK hydrolyzes its bound ATP, resulting in the formation of a stable complex. GrpE releases ADP from DnaK; ATP binding to DnaK triggers the release of the substrate protein, thus completing the reaction cycle. Several rounds of ATP-dependent interactions between DnaJ, DnaK and GrpE are required for fully efficient folding. Also involved, together with DnaK and GrpE, in the DNA replication of plasmids through activation of initiation proteins. This is Chaperone protein DnaJ from Staphylococcus epidermidis (strain ATCC 12228 / FDA PCI 1200).